The primary structure comprises 186 residues: Imidazoleglycerol-phosphate dehydratase (186 aa).

Belongs to the imidazoleglycerol-phosphate dehydratase family.

The protein resides in the cytoplasm. It catalyses the reaction D-erythro-1-(imidazol-4-yl)glycerol 3-phosphate = 3-(imidazol-4-yl)-2-oxopropyl phosphate + H2O. The protein operates within amino-acid biosynthesis; L-histidine biosynthesis; L-histidine from 5-phospho-alpha-D-ribose 1-diphosphate: step 6/9. This is Imidazoleglycerol-phosphate dehydratase from Dictyoglomus turgidum (strain DSM 6724 / Z-1310).